The sequence spans 2898 residues: Pericentrin (2898 aa).

The interval 1–117 (MEDEQEQRRR…QPPPPQTAHS (117 aa)) is disordered. Residues 34–44 (SKKKTAKRKGS) show a composition bias toward basic residues. Ser-44 bears the Phosphoserine mark. Coiled-coil stretches lie at residues 127-343 (LNNM…IRLL) and 382-434 (AQQQ…DSLE). Residues 429–460 (REDSLESTEISSSCVLPEETSGREGKEPPDPL) are disordered. A compositionally biased stretch (basic and acidic residues) spans 448–457 (TSGREGKEPP). 4 coiled-coil regions span residues 468–527 (KVQE…LREK), 611–696 (CALQ…LETH), 727–787 (VADV…SLRM), and 872–939 (SQDQ…LRRL). Ser-1022 carries the phosphoserine modification. Coiled-coil stretches lie at residues 1069-1383 (EREF…QENM), 1429-1482 (NEVV…SLMG), and 1529-1593 (QLLA…AKEA). Phosphoserine is present on Ser-1437. Disordered stretches follow at residues 1745 to 1786 (VASR…DDVL), 1815 to 1880 (TQEK…PLTP), and 1958 to 1979 (TSPS…GPDI). 2 stretches are compositionally biased toward polar residues: residues 1747 to 1766 (SRDT…SENG) and 1817 to 1834 (EKLT…SGHS). The segment at 1801–1822 (NQDLLVQVEMPDFPTQEKLTSQ) is interaction with CDK5RAP2. 4 positions are modified to phosphoserine: Ser-1828, Ser-1859, Ser-1860, and Ser-1959. Residues 1963 to 1976 (ELARRSDGSRKSDG) are compositionally biased toward basic and acidic residues. The residue at position 1987 (Ser-1987) is a Phosphoserine. Polar residues predominate over residues 2046–2055 (SESQDPSSAL). Residues 2046 to 2088 (SESQDPSSALNKGEPRDPLDGFPRDSQALSEVTTDKGEKESLE) are disordered. Composition is skewed to basic and acidic residues over residues 2058–2068 (GEPRDPLDGFP) and 2078–2088 (TTDKGEKESLE). Phosphoserine is present on Ser-2128. 2 coiled-coil regions span residues 2211–2403 (KVEQ…EALQ) and 2429–2590 (HALL…ELSM). Disordered regions lie at residues 2509 to 2532 (VSGG…QFQE) and 2653 to 2684 (NRQS…QTTS). The interval 2545-2810 (LCAAGLLTSF…SQRQRSPSGP (266 aa)) is interaction with NEK2. The segment covering 2653–2671 (NRQSKSSLKQDGTDLQSSL) has biased composition (polar residues). Positions 2758–2771 (KFRTAVRVVIAVLR) are calmodulin-binding. Residues 2787 to 2898 (ALVHPKSTRH…QKSCHQKIKQ (112 aa)) form a disordered region. The span at 2792–2802 (KSTRHGHRTSQ) shows a compositional bias: basic residues. Residues 2845–2860 (TSTPSSRLERSLTASQ) are compositionally biased toward polar residues. Over residues 2861–2874 (DPEHSLTEYIHHLE) the composition is skewed to basic and acidic residues. Ser-2865 is modified (phosphoserine).

In terms of assembly, interacts with DISC1 and PCM1. Binds calmodulin. Interacts with CEP131. Interacts with CDK5RAP2; the interaction is leading to centrosomal localization of PCNT and CDK5RAP2. Interacts with CHD3. Interacts with CHD4; the interaction regulates centrosome integrity. Interacts with NEK2. Interacts with CCDC13. Interacts with CEP68. Interacts with ATF5; the ATF5:PCNT:polyglutamylated tubulin (PGT) tripartite unites the mother centriole and the pericentriolar material (PCM) in the centrosome. In terms of processing, cleaved during mitotis which leads to removal of CDK5RAP2 from the centrosome and promotes centriole disengagement and subsequent centriole separation. The C-terminal fragment is rapidly degraded following cleavage. Post-translationally, ubiquitinated by TRIM43; leading to proteasomal degradation. As to expression, expressed in heart and lung (at protein level). Expressed in kidney, thymus, liver, brain, muscle, testis, spleen, lung and heart.

It is found in the cytoplasm. The protein localises to the cytoskeleton. The protein resides in the microtubule organizing center. It localises to the centrosome. Its function is as follows. Integral component of the filamentous matrix of the centrosome involved in the initial establishment of organized microtubule arrays in both mitosis and meiosis. Plays a role, together with DISC1, in the microtubule network formation. Is an integral component of the pericentriolar material (PCM). May play an important role in preventing premature centrosome splitting during interphase by inhibiting NEK2 kinase activity at the centrosome. This is Pericentrin (Pcnt) from Mus musculus (Mouse).